The sequence spans 109 residues: Nucleoid-associated protein BCB4264_A0025 (109 aa).

This sequence belongs to the YbaB/EbfC family. Homodimer.

It localises to the cytoplasm. The protein resides in the nucleoid. In terms of biological role, binds to DNA and alters its conformation. May be involved in regulation of gene expression, nucleoid organization and DNA protection. The polypeptide is Nucleoid-associated protein BCB4264_A0025 (Bacillus cereus (strain B4264)).